Consider the following 489-residue polypeptide: Hydantoin permease (489 aa).

The next 12 membrane-spanning stretches (helical) occupy residues 30–50, 58–78, 104–124, 144–164, 167–187, 207–227, 258–278, 299–321, 339–359, 362–382, 405–424, and 428–445; these read FSLA…IAAG, VWQV…LLFF, LIPI…QTWL, LWIV…ITFI, MNVF…YLML, MPFS…VVSI, LGMV…MVLV, AILF…NLLS, GVIV…AGVL, FLNL…SDYF, RGVN…VSFL, and LMFV…IPAM. 2 residues coordinate Na(+): Ala-38 and Ile-41. Substrate is bound at residue Gln-121. Gly-219 lines the substrate pocket. Residues Ala-309, Ser-312, and Thr-313 each contribute to the Na(+) site. Position 318 (Asn-318) interacts with substrate. The tract at residues 468 to 489 is disordered; sequence PIGPVAPADESATANTKEQNQR. Residues 479-489 are compositionally biased toward polar residues; that stretch reads ATANTKEQNQR.

It belongs to the purine-cytosine permease (2.A.39) family.

It localises to the membrane. Inhibited by dinitrophenol, 5-(2-naphthylmethyl)-D-hydantoin (D-NMH), 5-(2-naphthylmethyl)-L-hydantoin (L-NMH), 5-bromovinylhydantoin (BVH) and 5-indolylmethyl-L-hydantoin (L-IMH). The affinity of benzyl-hydantoin is increased over 10-fold in the presence of 15 mM of sodium. Nucleobase-proton symporter that mediates the sodium-dependent binding and uptake of 5-aryl-substituted hydantoin compounds. 5-indolyl methyl hydantoin and 5-benzyl hydantoin are the preferred substrates, with selectivity for a hydrophobic substituent in position 5 of hydantoin and for the L isomer over the D isomer. This Microbacterium maritypicum (Microbacterium liquefaciens) protein is Hydantoin permease.